The sequence spans 531 residues: Na(+)/H(+) antiporter NhaB (531 aa).

11 helical membrane passes run 23–45 (IAIL…VAGW), 66–86 (PGGL…SQVL), 97–117 (LLLI…LFVF), 130–164 (VSLM…FYSI), 206–226 (LLMH…VGEP), 244–264 (LRMG…CFLV), 307–327 (AFVG…VGLI), 352–372 (EEAL…GVII), 393–413 (LVIF…VFVG), 451–471 (ATPN…APLI), and 478–498 (MVWM…LAIE).

Belongs to the NhaB Na(+)/H(+) (TC 2.A.34) antiporter family.

It is found in the cell inner membrane. It catalyses the reaction 2 Na(+)(in) + 3 H(+)(out) = 2 Na(+)(out) + 3 H(+)(in). Na(+)/H(+) antiporter that extrudes sodium in exchange for external protons. The polypeptide is Na(+)/H(+) antiporter NhaB (Shewanella loihica (strain ATCC BAA-1088 / PV-4)).